The following is a 319-amino-acid chain: Pantothenate kinase (319 aa).

ATP is bound at residue 97–104 (GSVAVGKS).

This sequence belongs to the prokaryotic pantothenate kinase family.

The protein localises to the cytoplasm. It catalyses the reaction (R)-pantothenate + ATP = (R)-4'-phosphopantothenate + ADP + H(+). Its pathway is cofactor biosynthesis; coenzyme A biosynthesis; CoA from (R)-pantothenate: step 1/5. The chain is Pantothenate kinase from Mesorhizobium japonicum (strain LMG 29417 / CECT 9101 / MAFF 303099) (Mesorhizobium loti (strain MAFF 303099)).